Consider the following 620-residue polypeptide: Glutathione-regulated potassium-efflux system protein KefC (620 aa).

12 consecutive transmembrane segments (helical) span residues 4 to 24, 26 to 46, 54 to 74, 90 to 110, 114 to 134, 149 to 169, 178 to 198, 218 to 238, 270 to 290, 294 to 314, 327 to 347, and 359 to 379; these read HTLI…PIAV, LGLG…PWGL, SILH…GLEL, GALQ…LLGL, VAEL…MQAM, FAVL…IPLL, MGAF…VVLL, VFSA…EEVG, GLLL…GTLL, LRIV…LWLI, WFAV…GAAQ, and SLTL…VILN. The 120-residue stretch at 399–518 folds into the RCK N-terminal domain; the sequence is QPRVIIAGFG…AGVEKPERET (120 aa). The segment at 597–620 is disordered; the sequence is GWQGTEEGKHTGNMADEPETKPSS.

This sequence belongs to the monovalent cation:proton antiporter 2 (CPA2) transporter (TC 2.A.37) family. KefC subfamily. In terms of assembly, homodimer. Interacts with the regulatory subunit KefF.

It localises to the cell inner membrane. In terms of biological role, pore-forming subunit of a potassium efflux system that confers protection against electrophiles. Catalyzes K(+)/H(+) antiport. The sequence is that of Glutathione-regulated potassium-efflux system protein KefC from Escherichia coli (strain K12 / MC4100 / BW2952).